Reading from the N-terminus, the 209-residue chain is Uracil phosphoribosyltransferase (209 aa).

Residues arginine 79, arginine 104, and 131-139 (DPMLATGGS) each bind 5-phospho-alpha-D-ribose 1-diphosphate. Residues isoleucine 194 and 199–201 (GDA) each bind uracil. Aspartate 200 is a 5-phospho-alpha-D-ribose 1-diphosphate binding site.

The protein belongs to the UPRTase family. Mg(2+) is required as a cofactor.

It catalyses the reaction UMP + diphosphate = 5-phospho-alpha-D-ribose 1-diphosphate + uracil. It functions in the pathway pyrimidine metabolism; UMP biosynthesis via salvage pathway; UMP from uracil: step 1/1. Allosterically activated by GTP. Catalyzes the conversion of uracil and 5-phospho-alpha-D-ribose 1-diphosphate (PRPP) to UMP and diphosphate. This chain is Uracil phosphoribosyltransferase, found in Macrococcus caseolyticus (strain JCSC5402) (Macrococcoides caseolyticum).